Consider the following 187-residue polypeptide: Threonylcarbamoyl-AMP synthase (187 aa).

Positions 4 to 187 constitute a YrdC-like domain; sequence TLTLSEAVTA…DARSGHILRL (184 aa).

This sequence belongs to the SUA5 family. TsaC subfamily.

It is found in the cytoplasm. The catalysed reaction is L-threonine + hydrogencarbonate + ATP = L-threonylcarbamoyladenylate + diphosphate + H2O. Its function is as follows. Required for the formation of a threonylcarbamoyl group on adenosine at position 37 (t(6)A37) in tRNAs that read codons beginning with adenine. Catalyzes the conversion of L-threonine, HCO(3)(-)/CO(2) and ATP to give threonylcarbamoyl-AMP (TC-AMP) as the acyladenylate intermediate, with the release of diphosphate. This is Threonylcarbamoyl-AMP synthase from Xylella fastidiosa (strain M23).